Here is a 288-residue protein sequence, read N- to C-terminus: MEINFRNVSFSYQLNTPFSTAALKDVSFDIPDGSFTSIVGHTGSGKSTVLQLIDGLLIPEKGHIQAGSFQMNSGSNAKHLKKFRKNVGFIFQFSENQLFEETVEKDLIFGPKNFGVEEKIAKEKARKVLKIVNLPESFLQKSPLDLSGGQRRRVAIASILISDPQLLLLDEPVIGLDPGSKDEIMNLFSRLNQQGKTIVMVSHEMDDVADYSDQIIVLNAGRISKVGSPEEIFSDESYLRKEKLRLPSAIDFAKQLKKVGFPINVSIKNKRELLREIKKQFEIEKDKK.

The region spanning I3 to R245 is the ABC transporter domain. Residue G40–S47 coordinates ATP.

Belongs to the ABC transporter superfamily. Energy-coupling factor EcfA family. Forms a stable energy-coupling factor (ECF) transporter complex composed of 2 membrane-embedded substrate-binding proteins (S component), 2 ATP-binding proteins (A component) and 2 transmembrane proteins (T component).

The protein localises to the cell membrane. ATP-binding (A) component of a common energy-coupling factor (ECF) ABC-transporter complex. Unlike classic ABC transporters this ECF transporter provides the energy necessary to transport a number of different substrates. The protein is Energy-coupling factor transporter ATP-binding protein EcfA3 of Oenococcus oeni (strain ATCC BAA-331 / PSU-1).